The chain runs to 1033 residues: SIT4-associating protein SAP190 (1033 aa).

Disordered stretches follow at residues 32-82 (DQDD…TTES), 147-213 (PEII…QVET), and 768-1033 (FGND…KEAF). The span at 158 to 170 (ILIERDRKDKKED) shows a compositional bias: basic and acidic residues. Over residues 171 to 182 (AEEGGDSEETTN) the composition is skewed to acidic residues. Basic and acidic residues predominate over residues 183–195 (DSDHDSGDERSVD). The residue at position 774 (S774) is a Phosphoserine. Acidic residues-rich tracts occupy residues 784-793 (SEDIIGDTEG) and 825-838 (ENEE…EYSD). S857, S862, and S892 each carry phosphoserine. The span at 858–879 (DDGKSKSAESEFTDKISEHRDG) shows a compositional bias: basic and acidic residues. Polar residues predominate over residues 909–924 (SRSQPSDPKLQDQNIF). A compositionally biased stretch (acidic residues) spans 932-944 (GVGDDDDYMDPND). T990 carries the phosphothreonine modification. S991 carries the phosphoserine modification. Acidic residues predominate over residues 1000–1018 (ISSDEEDSEDEDEENDMGN).

Belongs to the SAPS family. As to quaternary structure, associates with the SIT4 protein phosphatase catalytic subunit in a cell-cycle-dependent manner. Post-translationally, hyperphosphorylated in the absence of SIT4.

The protein localises to the cytoplasm. Positive regulator of protein phosphatase SIT4. Involved in the general amino acid control (GAAC) response regulated by TOR. Involved in the dephosphorylation of the elongator complex subunit IKI3. This Saccharomyces cerevisiae (strain ATCC 204508 / S288c) (Baker's yeast) protein is SIT4-associating protein SAP190 (SAP190).